Reading from the N-terminus, the 187-residue chain is dCTP deaminase (187 aa).

DCTP is bound by residues Lys-110–Arg-115, Thr-134–Glu-136, Gln-155, Tyr-169, and Gln-179. Catalysis depends on Glu-136, which acts as the Proton donor/acceptor.

The protein belongs to the dCTP deaminase family. In terms of assembly, homotrimer.

It catalyses the reaction dCTP + H2O + H(+) = dUTP + NH4(+). Its pathway is pyrimidine metabolism; dUMP biosynthesis; dUMP from dCTP (dUTP route): step 1/2. Functionally, catalyzes the deamination of dCTP to dUTP. This chain is dCTP deaminase, found in Bordetella petrii (strain ATCC BAA-461 / DSM 12804 / CCUG 43448).